The following is a 572-amino-acid chain: Frizzled-7 (572 aa).

Positions 1-32 (MRGPGTAASHSPLGLCALVLALLGALPTDTRA) are cleaved as a signal peptide. Residues 33-254 (QPYHGEKGIS…EEERRFARLW (222 aa)) are Extracellular-facing. An FZ domain is found at 44-163 (PDHGFCQPIS…HGAGEICVGQ (120 aa)). Disulfide bonds link cysteine 49–cysteine 110, cysteine 57–cysteine 103, cysteine 94–cysteine 131, cysteine 120–cysteine 160, and cysteine 124–cysteine 148. A glycan (N-linked (GlcNAc...) asparagine) is linked at asparagine 63. N-linked (GlcNAc...) asparagine glycosylation occurs at asparagine 164. Residues 255-275 (VGVWSVLCCASTLFTVLTYLV) traverse the membrane as a helical segment. At 276–286 (DMRRFSYPERP) the chain is on the cytoplasmic side. The chain crosses the membrane as a helical span at residues 287-307 (IIFLSGCYFMVAVAHVAGFLL). Over 308 to 334 (EDRAVCVERFSDDGYRTVAQGTKKEGC) the chain is Extracellular. A helical transmembrane segment spans residues 335 to 355 (TILFMVLYFFGMASSIWWVIL). Residues 356–377 (SLTWFLAAGMKWGHEAIEANSQ) lie on the Cytoplasmic side of the membrane. The chain crosses the membrane as a helical span at residues 378–398 (YFHLAAWAVPAVKTITILAMG). Residues 399 to 421 (QVDGDLLSGVCYVGLSSVDALRG) are Extracellular-facing. The chain crosses the membrane as a helical span at residues 422 to 442 (FVLAPLFVYLFIGTSFLLAGF). Over 443-468 (VSLFRIRTIMKHDGTKTEKLEKLMVR) the chain is Cytoplasmic. Residues 469–489 (IGVFSVLYTVPATIVLACYFY) traverse the membrane as a helical segment. The Extracellular segment spans residues 490–526 (EQAFREHWERTWLLQTCKSYAVPCPPGHFSPMSPDFT). A helical transmembrane segment spans residues 527-547 (VFMIKYLMTMIVGITTGFWIW). The Cytoplasmic segment spans residues 548 to 572 (SGKTLQSWRRFYHRLSHSSKGETAV). A Lys-Thr-X-X-X-Trp motif, mediates interaction with the PDZ domain of Dvl family members motif is present at residues 550–555 (KTLQSW). The PDZ-binding motif lies at 570-572 (TAV).

The protein belongs to the G-protein coupled receptor Fz/Smo family. As to quaternary structure, interacts with MAGI3. Interacts with DVL1. Interacts with CCDC88C/DAPLE; the interaction displaces DVL1 from FZD7, leading to inhibition of canonical Wnt signaling and triggering of non-canonical Wnt responses. Interacts with MYOC. Binds to SDCBP; this interaction is increased by inositol trisphosphate (IP3). Interacts with glypican GPC3. In terms of processing, ubiquitinated by ZNRF3, leading to its degradation by the proteasome.

It is found in the cell membrane. Its subcellular location is the endosome membrane. In terms of biological role, receptor for Wnt proteins. Most frizzled receptors are coupled to the beta-catenin canonical signaling pathway, which leads to the activation of disheveled proteins, inhibition of GSK-3 kinase, nuclear accumulation of beta-catenin and activation of Wnt target genes. A second signaling pathway involving PKC and calcium fluxes has been seen for some family members, but it is not yet clear if it represents a distinct pathway or if it can be integrated in the canonical pathway, as PKC seems to be required for Wnt-mediated inactivation of GSK-3 kinase. Both pathways seem to involve interactions with G-proteins. Activation by WNT8 induces expression of beta-catenin target genes. Following ligand activation, binds to CCDC88C/DAPLE which displaces DVL1 from FZD7 and leads to inhibition of canonical Wnt signaling, activation of G-proteins by CCDC88C and triggering of non-canonical Wnt responses. May be involved in transduction and intercellular transmission of polarity information during tissue morphogenesis and/or in differentiated tissues. The chain is Frizzled-7 (Fzd7) from Mus musculus (Mouse).